The following is a 180-amino-acid chain: Large ribosomal subunit protein bL17 (180 aa).

The interval 134–180 is disordered; that stretch reads AQAKAKKAAAMPTEESEAKPAEEGDVVGASEPDAKAPEEPPTEAPEN.

It belongs to the bacterial ribosomal protein bL17 family. As to quaternary structure, part of the 50S ribosomal subunit. Contacts protein L32.

The polypeptide is Large ribosomal subunit protein bL17 (Mycobacterium tuberculosis (strain CDC 1551 / Oshkosh)).